The primary structure comprises 520 residues: Transactivator/viroplasmin protein (520 aa).

The interval 486–520 (VQDASADSGPKDGPPPTRSIVEKEDVPTTSSKQVD) is disordered.

The protein belongs to the caulimoviridae viroplasmin family.

The protein localises to the host cytoplasm. In terms of biological role, enhances the ribosomal termination-reinitiation event leading to the translation of major open reading frames on the polycistronic viral RNAs. This is Transactivator/viroplasmin protein from Cauliflower mosaic virus (strain NY8153) (CaMV).